Reading from the N-terminus, the 471-residue chain is N(6)-adenine-specific methyltransferase METTL4 (471 aa).

This sequence belongs to the MT-A70-like family.

It localises to the nucleus. The catalysed reaction is a 2'-O-methyladenosine in U2 snRNA + S-adenosyl-L-methionine = an N(6)-methyl-2'-O-methyladenosine in U2 snRNA + S-adenosyl-L-homocysteine + H(+). It catalyses the reaction a 2'-deoxyadenosine in DNA + S-adenosyl-L-methionine = an N(6)-methyl-2'-deoxyadenosine in DNA + S-adenosyl-L-homocysteine + H(+). N(6)-adenine-specific methyltransferase that can methylate both RNAs and DNA. Acts as a N(6)-adenine-specific RNA methyltransferase by catalyzing formation of N6,2'-O-dimethyladenosine (m6A(m)) on internal positions of U2 small nuclear RNA (snRNA): methylates the 6th position of adenine residues with a pre-deposited 2'-O-methylation. Internal m6A(m) methylation of snRNAs regulates RNA splicing. Also able to act as a N(6)-adenine-specific DNA methyltransferase by mediating methylation of DNA on the 6th position of adenine (N(6)-methyladenosine). The existence of N(6)-methyladenosine (m6A) on DNA is however unclear in mammals, and additional evidences are required to confirm the role of the N(6)-adenine-specific DNA methyltransferase activity of METTL4 in vivo. Acts as a regulator of mitochondrial transcript levels and mitochondrial DNA (mtDNA) copy number by mediating mtDNA N(6)-methylation: m6A on mtDNA reduces transcription by repressing TFAM DNA-binding and bending. N(6)-methyladenosine deposition by METTL4 regulates Polycomb silencing by triggering ubiquitination and degradation of sensor proteins ASXL1 and MPND, leading to inactivation of the PR-DUB complex and subsequent preservation of Polycomb silencing. This is N(6)-adenine-specific methyltransferase METTL4 from Mus musculus (Mouse).